The following is a 606-amino-acid chain: Isocitrate dehydrogenase kinase/phosphatase (606 aa).

ATP contacts are provided by residues 354–360 and Lys375; that span reads APGFKGT. The active site involves Asp414.

Belongs to the AceK family.

It is found in the cytoplasm. It carries out the reaction L-seryl-[isocitrate dehydrogenase] + ATP = O-phospho-L-seryl-[isocitrate dehydrogenase] + ADP + H(+). Bifunctional enzyme which can phosphorylate or dephosphorylate isocitrate dehydrogenase (IDH) on a specific serine residue. This is a regulatory mechanism which enables bacteria to bypass the Krebs cycle via the glyoxylate shunt in response to the source of carbon. When bacteria are grown on glucose, IDH is fully active and unphosphorylated, but when grown on acetate or ethanol, the activity of IDH declines drastically concomitant with its phosphorylation. The sequence is that of Isocitrate dehydrogenase kinase/phosphatase from Rhodopseudomonas palustris (strain BisB5).